A 299-amino-acid polypeptide reads, in one-letter code: MKPDAHQVKQFLLNLQDTICQQLSAVDGAEFVEDSWLREAGGGGRSRVLRNGGVFEQAGVNFSHVHGEVMPASATAHRPELAGRSFEAMGVSLVVHPHNPYVPTSHANVRFFIAEKPGAEPVWWFGGGFDLTPFYGFEEDAIHWHRTARDLCQPFGEDVYPRYKKWCDEYFYLKHRNEQRGIGGLFFDDLNTPDFDHCFAFMQAVGKGYTNAYLPIVERRKTMAYGERERNFQLYRRGRYVEFNLVWDRGTLFGLQTGGRTESILMSMPPLVRWEYDYQPKDGSPEAALNEFIKVRDWV.

Ser-92 serves as a coordination point for substrate. His-96 and His-106 together coordinate Mn(2+). Residue His-106 is the Proton donor of the active site. 108-110 serves as a coordination point for substrate; the sequence is NVR. 2 residues coordinate Mn(2+): His-145 and His-175. The important for dimerization stretch occupies residues 240–275; that stretch reads YVEFNLVWDRGTLFGLQTGGRTESILMSMPPLVRWE. 258 to 260 provides a ligand contact to substrate; it reads GGR.

Belongs to the aerobic coproporphyrinogen-III oxidase family. In terms of assembly, homodimer. Requires Mn(2+) as cofactor.

The protein localises to the cytoplasm. It carries out the reaction coproporphyrinogen III + O2 + 2 H(+) = protoporphyrinogen IX + 2 CO2 + 2 H2O. It participates in porphyrin-containing compound metabolism; protoporphyrin-IX biosynthesis; protoporphyrinogen-IX from coproporphyrinogen-III (O2 route): step 1/1. Functionally, involved in the heme biosynthesis. Catalyzes the aerobic oxidative decarboxylation of propionate groups of rings A and B of coproporphyrinogen-III to yield the vinyl groups in protoporphyrinogen-IX. The chain is Oxygen-dependent coproporphyrinogen-III oxidase from Escherichia coli (strain SMS-3-5 / SECEC).